The following is a 264-amino-acid chain: Thymidylate synthase (264 aa).

A dUMP-binding site is contributed by Arg21. His51 serves as a coordination point for (6R)-5,10-methylene-5,6,7,8-tetrahydrofolate. 126–127 (RR) is a binding site for dUMP. The Nucleophile role is filled by Cys146. DUMP contacts are provided by residues 166–169 (RSAD), Asn177, and 207–209 (HLY). Residue Asp169 participates in (6R)-5,10-methylene-5,6,7,8-tetrahydrofolate binding. Ala263 contacts (6R)-5,10-methylene-5,6,7,8-tetrahydrofolate.

It belongs to the thymidylate synthase family. Bacterial-type ThyA subfamily. In terms of assembly, homodimer.

Its subcellular location is the cytoplasm. The catalysed reaction is dUMP + (6R)-5,10-methylene-5,6,7,8-tetrahydrofolate = 7,8-dihydrofolate + dTMP. Its pathway is pyrimidine metabolism; dTTP biosynthesis. In terms of biological role, catalyzes the reductive methylation of 2'-deoxyuridine-5'-monophosphate (dUMP) to 2'-deoxythymidine-5'-monophosphate (dTMP) while utilizing 5,10-methylenetetrahydrofolate (mTHF) as the methyl donor and reductant in the reaction, yielding dihydrofolate (DHF) as a by-product. This enzymatic reaction provides an intracellular de novo source of dTMP, an essential precursor for DNA biosynthesis. This Cytophaga hutchinsonii (strain ATCC 33406 / DSM 1761 / CIP 103989 / NBRC 15051 / NCIMB 9469 / D465) protein is Thymidylate synthase.